A 178-amino-acid polypeptide reads, in one-letter code: Ribosome maturation factor RimP (178 aa).

This sequence belongs to the RimP family.

It localises to the cytoplasm. Its function is as follows. Required for maturation of 30S ribosomal subunits. The protein is Ribosome maturation factor RimP of Mycolicibacterium paratuberculosis (strain ATCC BAA-968 / K-10) (Mycobacterium paratuberculosis).